The primary structure comprises 299 residues: ATP phosphoribosyltransferase (299 aa).

Belongs to the ATP phosphoribosyltransferase family. Long subfamily. Equilibrium between an active dimeric form, an inactive hexameric form and higher aggregates. Interconversion between the various forms is largely reversible and is influenced by the natural substrates and inhibitors of the enzyme. It depends on Mg(2+) as a cofactor.

It localises to the cytoplasm. It catalyses the reaction 1-(5-phospho-beta-D-ribosyl)-ATP + diphosphate = 5-phospho-alpha-D-ribose 1-diphosphate + ATP. Its pathway is amino-acid biosynthesis; L-histidine biosynthesis; L-histidine from 5-phospho-alpha-D-ribose 1-diphosphate: step 1/9. Feedback inhibited by histidine. Its function is as follows. Catalyzes the condensation of ATP and 5-phosphoribose 1-diphosphate to form N'-(5'-phosphoribosyl)-ATP (PR-ATP). Has a crucial role in the pathway because the rate of histidine biosynthesis seems to be controlled primarily by regulation of HisG enzymatic activity. The sequence is that of ATP phosphoribosyltransferase from Blochmanniella pennsylvanica (strain BPEN).